The following is a 244-amino-acid chain: Lipoprotein-releasing system ATP-binding protein LolD (244 aa).

The ABC transporter domain maps to 19-244 (IRAEALAKTY…KLRELAPSAV (226 aa)). 55–62 (GASGAGKS) is an ATP binding site.

This sequence belongs to the ABC transporter superfamily. Lipoprotein translocase (TC 3.A.1.125) family. The complex is composed of two ATP-binding proteins (LolD) and two transmembrane proteins (LolC and LolE).

It localises to the cell inner membrane. In terms of biological role, part of the ABC transporter complex LolCDE involved in the translocation of mature outer membrane-directed lipoproteins, from the inner membrane to the periplasmic chaperone, LolA. Responsible for the formation of the LolA-lipoprotein complex in an ATP-dependent manner. The chain is Lipoprotein-releasing system ATP-binding protein LolD from Xanthomonas axonopodis pv. citri (strain 306).